Consider the following 977-residue polypeptide: DNA-directed RNA polymerase 3A, chloroplastic (977 aa).

A chloroplast-targeting transit peptide spans 1 to 72; that stretch reads MASTASYSPS…NNIQSQTTVC (72 aa). Active-site residues include Asp-678, Lys-753, and Asp-910.

The protein belongs to the phage and mitochondrial RNA polymerase family.

Its subcellular location is the plastid. It localises to the chloroplast. The catalysed reaction is RNA(n) + a ribonucleoside 5'-triphosphate = RNA(n+1) + diphosphate. Its function is as follows. DNA-dependent RNA polymerase catalyzes the transcription of DNA into RNA using the four ribonucleoside triphosphates as substrates. The sequence is that of DNA-directed RNA polymerase 3A, chloroplastic (RPOT3-SYL) from Nicotiana tabacum (Common tobacco).